Consider the following 220-residue polypeptide: Flavin-dependent thymidylate synthase (220 aa).

A ThyX domain is found at 1–208 (MKIDILDKGF…PWTFEAFLKY (208 aa)). Residues Thr55, 78–80 (RHR), and Glu86 each bind FAD. Residues 75–78 (QWFR), 86–90 (ELSGR), and Arg147 each bind dUMP. Positions 78–88 (RHRIASYNELS) match the ThyX motif motif. FAD contacts are provided by residues 163-165 (NAR) and Asn169. Arg174 is a dUMP binding site. The active-site Involved in ionization of N3 of dUMP, leading to its activation is the Arg174.

This sequence belongs to the thymidylate synthase ThyX family. In terms of assembly, homotetramer. It depends on FAD as a cofactor.

It catalyses the reaction dUMP + (6R)-5,10-methylene-5,6,7,8-tetrahydrofolate + NADPH + H(+) = dTMP + (6S)-5,6,7,8-tetrahydrofolate + NADP(+). It participates in pyrimidine metabolism; dTTP biosynthesis. Functionally, catalyzes the reductive methylation of 2'-deoxyuridine-5'-monophosphate (dUMP) to 2'-deoxythymidine-5'-monophosphate (dTMP) while utilizing 5,10-methylenetetrahydrofolate (mTHF) as the methyl donor, and NADPH and FADH(2) as the reductant. The chain is Flavin-dependent thymidylate synthase from Thermotoga petrophila (strain ATCC BAA-488 / DSM 13995 / JCM 10881 / RKU-1).